The sequence spans 978 residues: Chitin synthase 3 (978 aa).

Positions 1–13 (MGFNPQGQGNGPN) are enriched in low complexity. Disordered regions lie at residues 1-95 (MGFN…FDGH) and 108-127 (GHYPADQHGRMPGSPGYEYP). The N-linked (GlcNAc...) asparagine glycan is linked to N72. N604 carries N-linked (GlcNAc...) asparagine glycosylation. A run of 7 helical transmembrane segments spans residues 641 to 661 (LVNVLFSWFSLAAFYLTTTII), 686 to 706 (IVNVLIKYIYIAFLVLQFVLA), 719 to 739 (VLSFMVFGLIQLYLLVLTGYL), 775 to 795 (LIIIALFTIYGLNYIASFLYL), 803 to 823 (SFPQYLVLMSTYINILMVYAF), 908 to 928 (VILWLLCNIVLIVVVTTDDFI), and 946 to 966 (VLLYSTAVLSIVRFFGFLWFI).

Belongs to the chitin synthase family. Class III subfamily.

Its subcellular location is the cell membrane. The catalysed reaction is [(1-&gt;4)-N-acetyl-beta-D-glucosaminyl](n) + UDP-N-acetyl-alpha-D-glucosamine = [(1-&gt;4)-N-acetyl-beta-D-glucosaminyl](n+1) + UDP + H(+). Polymerizes chitin, a structural polymer of the cell wall and septum, by transferring the sugar moiety of UDP-GlcNAc to the non-reducing end of the growing chitin polymer. Is essential for viability. In Fusarium oxysporum f. sp. lycopersici (strain 4287 / CBS 123668 / FGSC 9935 / NRRL 34936) (Fusarium vascular wilt of tomato), this protein is Chitin synthase 3.